The following is a 173-amino-acid chain: Large ribosomal subunit protein uL10 (173 aa).

This sequence belongs to the universal ribosomal protein uL10 family. As to quaternary structure, part of the ribosomal stalk of the 50S ribosomal subunit. The N-terminus interacts with L11 and the large rRNA to form the base of the stalk. The C-terminus forms an elongated spine to which L12 dimers bind in a sequential fashion forming a multimeric L10(L12)X complex.

Functionally, forms part of the ribosomal stalk, playing a central role in the interaction of the ribosome with GTP-bound translation factors. The chain is Large ribosomal subunit protein uL10 from Thermus thermophilus (strain ATCC BAA-163 / DSM 7039 / HB27).